We begin with the raw amino-acid sequence, 649 residues long: ENTH domain-containing protein C19F8.03c (649 aa).

The region spanning 2-136 (SPSKWLLTYE…VDYAQVGDAP (135 aa)) is the ENTH domain. Disordered stretches follow at residues 280–382 (YLQN…NELE), 409–440 (LSAEGTSASPSLDKKSESTNIVQPIPSHPNDS), and 590–649 (FTHG…PFRS). 2 positions are modified to phosphoserine: S285 and S287. Positions 299 to 308 (PTLRKKKSIP) are enriched in basic residues. Composition is skewed to polar residues over residues 313-326 (ESSSTIQKENTVQQ) and 340-349 (PETQRTTSRI). Positions 352 to 381 (QEEEIKEEEMEGEEEEEEEEVPNYESENEL) are enriched in acidic residues. 3 stretches are compositionally biased toward polar residues: residues 409 to 418 (LSAEGTSASP), 614 to 624 (TPYTASKNPFS), and 635 to 649 (ARNSISTESKNPFRS). A Phosphothreonine modification is found at T414. S417 carries the post-translational modification Phosphoserine.

It localises to the cytoplasm. This is ENTH domain-containing protein C19F8.03c from Schizosaccharomyces pombe (strain 972 / ATCC 24843) (Fission yeast).